The chain runs to 531 residues: Putative cysteine ligase BshC (531 aa).

Residues 447-481 (KAQEKKQTKGLDNLEKRLLKAEKKMHSEKLKKIIE) adopt a coiled-coil conformation.

The protein belongs to the BshC family.

This Flavobacterium psychrophilum (strain ATCC 49511 / DSM 21280 / CIP 103535 / JIP02/86) protein is Putative cysteine ligase BshC.